A 305-amino-acid polypeptide reads, in one-letter code: Spermatogenesis-associated protein 4 (305 aa).

The region spanning 49 to 155 is the Calponin-homology (CH) domain; it reads SRLSRSVLRW…EEVYTLLTHR (107 aa).

It localises to the nucleus. Functionally, may play a role in apoptosis regulation. The polypeptide is Spermatogenesis-associated protein 4 (SPATA4) (Pan troglodytes (Chimpanzee)).